A 215-amino-acid chain; its full sequence is 25 kDa ookinete surface antigen (215 aa).

The N-terminal stretch at 1 to 16 is a signal peptide; that stretch reads MNMSYLFFFFFIQLVL. An EGF-like 1; truncated domain is found at 29–58; that stretch reads CKDGFLIQMSNHFECNCNPGFVLTSESTCE. EGF-like domains lie at 59-104, 104-148, and 151-191; these read NKVE…SICV, VPNE…NTCT, and GQTE…NACI. 9 disulfides stabilise this stretch: cysteine 63–cysteine 78, cysteine 72–cysteine 90, cysteine 92–cysteine 103, cysteine 108–cysteine 118, cysteine 113–cysteine 131, cysteine 133–cysteine 147, cysteine 155–cysteine 166, cysteine 159–cysteine 175, and cysteine 177–cysteine 190. N-linked (GlcNAc...) asparagine glycosylation is found at asparagine 144 and asparagine 163. Residue serine 192 is the site of GPI-anchor amidated serine attachment. Positions 193-215 are cleaved as a propeptide — removed in mature form; the sequence is FSLFNILNLSIIFIISLIYFYII. A glycan (N-linked (GlcNAc...) asparagine) is linked at asparagine 200.

Its subcellular location is the cell membrane. The protein is 25 kDa ookinete surface antigen of Plasmodium gallinaceum.